Consider the following 401-residue polypeptide: Phosphonopyruvate decarboxylase (401 aa).

The tract at residues 382-401 is disordered; that stretch reads WPASAVGSGTRAAAGSAGDR. A compositionally biased stretch (low complexity) spans 384-401; the sequence is ASAVGSGTRAAAGSAGDR.

This sequence belongs to the TPP enzyme family. Requires thiamine diphosphate as cofactor. It depends on Mg(2+) as a cofactor.

It carries out the reaction 3-phosphonopyruvate + H(+) = phosphonoacetaldehyde + CO2. The protein operates within secondary metabolite biosynthesis; bialaphos biosynthesis. Its function is as follows. Involved in the biosynthesis of phosphinothricin tripeptide (PTT), also known as bialaphos (BA), a natural-product antibiotic and potent herbicide. Catalyzes the decarboxylation of phosphonopyruvate (PnPy) to generate phosphonoacetaldehyde (PnAA). This is Phosphonopyruvate decarboxylase from Streptomyces hygroscopicus.